A 727-amino-acid polypeptide reads, in one-letter code: Elongation factor 2 (727 aa).

Residues 19 to 260 form the tr-type G domain; the sequence is EQIRNMGICA…MSIKHLPNPL (242 aa). Residues 28 to 35, 94 to 98, and 148 to 151 contribute to the GTP site; these read AHIDHGKT, DTPGH, and NKVD. Position 603 is a diphthamide (His-603).

It belongs to the TRAFAC class translation factor GTPase superfamily. Classic translation factor GTPase family. EF-G/EF-2 subfamily.

The protein localises to the cytoplasm. In terms of biological role, catalyzes the GTP-dependent ribosomal translocation step during translation elongation. During this step, the ribosome changes from the pre-translocational (PRE) to the post-translocational (POST) state as the newly formed A-site-bound peptidyl-tRNA and P-site-bound deacylated tRNA move to the P and E sites, respectively. Catalyzes the coordinated movement of the two tRNA molecules, the mRNA and conformational changes in the ribosome. The polypeptide is Elongation factor 2 (Methanococcus maripaludis (strain DSM 14266 / JCM 13030 / NBRC 101832 / S2 / LL)).